Here is a 315-residue protein sequence, read N- to C-terminus: MSDSLRIVFAGTPDFAARHLEALLMSQHEVVGVLTRPDKPAGRGKKLTPSPVKVLAEERNITVFQPATLRSEENQQWVLKQQPDVLIVVAYGLILPKVVLNIPELGCLNVHGSLLPRWRGAAPIQRSLWAGDTETGVTIMQMDIGLDTGDMLYKARCPITPEDTSASLYEKLANIGPDALLKTLSLITSGKSQPETQNENLVTYAEKLSKEEARINWELSATHLERCIRAFNPWPMSFFEMEGQPIKVWKAEAIEEQTSVEPGTVLKADKEGIYIATADGILNITQLQPAGKKAMSAANLLNSKREWFTPGNKIN.

Residue 113–116 (SLLP) participates in (6S)-5,6,7,8-tetrahydrofolate binding.

The protein belongs to the Fmt family.

It catalyses the reaction L-methionyl-tRNA(fMet) + (6R)-10-formyltetrahydrofolate = N-formyl-L-methionyl-tRNA(fMet) + (6S)-5,6,7,8-tetrahydrofolate + H(+). Attaches a formyl group to the free amino group of methionyl-tRNA(fMet). The formyl group appears to play a dual role in the initiator identity of N-formylmethionyl-tRNA by promoting its recognition by IF2 and preventing the misappropriation of this tRNA by the elongation apparatus. The chain is Methionyl-tRNA formyltransferase from Photorhabdus laumondii subsp. laumondii (strain DSM 15139 / CIP 105565 / TT01) (Photorhabdus luminescens subsp. laumondii).